The chain runs to 90 residues: RNA-binding protein Hfq (90 aa).

Residues 11-71 (DVFLNSVRKT…ISTIMPAAPV (61 aa)) form the Sm domain.

This sequence belongs to the Hfq family. Homohexamer.

In terms of biological role, RNA chaperone that binds small regulatory RNA (sRNAs) and mRNAs to facilitate mRNA translational regulation in response to envelope stress, environmental stress and changes in metabolite concentrations. Also binds with high specificity to tRNAs. The protein is RNA-binding protein Hfq of Maricaulis maris (strain MCS10) (Caulobacter maris).